A 424-amino-acid polypeptide reads, in one-letter code: Elongation factor 1-alpha (424 aa).

The tr-type G domain maps to Lys-5–Val-223. Residues Gly-14 to Ser-21 form a G1 region. Gly-14–Ser-21 is a binding site for GTP. Ser-21 provides a ligand contact to Mg(2+). The G2 stretch occupies residues Gly-70–Asp-74. The G3 stretch occupies residues Asp-91–Gly-94. GTP is bound by residues Asp-91 to His-95 and Asn-146 to Asp-149. The segment at Asn-146–Asp-149 is G4. Residues Ser-187–Tyr-189 are G5.

It belongs to the TRAFAC class translation factor GTPase superfamily. Classic translation factor GTPase family. EF-Tu/EF-1A subfamily.

Its subcellular location is the cytoplasm. The enzyme catalyses GTP + H2O = GDP + phosphate + H(+). GTP hydrolase that promotes the GTP-dependent binding of aminoacyl-tRNA to the A-site of ribosomes during protein biosynthesis. The sequence is that of Elongation factor 1-alpha from Methanothrix thermoacetophila (strain DSM 6194 / JCM 14653 / NBRC 101360 / PT) (Methanosaeta thermophila).